The sequence spans 156 residues: Lipoprotein signal peptidase (156 aa).

Transmembrane regions (helical) follow at residues V37–L57, F68–E88, and I95–Y115. Catalysis depends on residues D120 and D138. The helical transmembrane segment at A133–Y153 threads the bilayer.

It belongs to the peptidase A8 family.

Its subcellular location is the cell inner membrane. The enzyme catalyses Release of signal peptides from bacterial membrane prolipoproteins. Hydrolyzes -Xaa-Yaa-Zaa-|-(S,diacylglyceryl)Cys-, in which Xaa is hydrophobic (preferably Leu), and Yaa (Ala or Ser) and Zaa (Gly or Ala) have small, neutral side chains.. It participates in protein modification; lipoprotein biosynthesis (signal peptide cleavage). Its function is as follows. This protein specifically catalyzes the removal of signal peptides from prolipoproteins. The sequence is that of Lipoprotein signal peptidase from Maridesulfovibrio salexigens (strain ATCC 14822 / DSM 2638 / NCIMB 8403 / VKM B-1763) (Desulfovibrio salexigens).